Here is a 44-residue protein sequence, read N- to C-terminus: Cytochrome b559 subunit beta (44 aa).

The chain crosses the membrane as a helical span at residues 19–35 (WLAVHTLAVPTVFFVGA). Residue His23 coordinates heme.

This sequence belongs to the PsbE/PsbF family. In terms of assembly, heterodimer of an alpha subunit and a beta subunit. PSII is composed of 1 copy each of membrane proteins PsbA, PsbB, PsbC, PsbD, PsbE, PsbF, PsbH, PsbI, PsbJ, PsbK, PsbL, PsbM, PsbT, PsbX, PsbY, PsbZ, Psb30/Ycf12, peripheral proteins PsbO, CyanoQ (PsbQ), PsbU, PsbV and a large number of cofactors. It forms dimeric complexes. Heme b is required as a cofactor.

It localises to the cellular thylakoid membrane. This b-type cytochrome is tightly associated with the reaction center of photosystem II (PSII). PSII is a light-driven water:plastoquinone oxidoreductase that uses light energy to abstract electrons from H(2)O, generating O(2) and a proton gradient subsequently used for ATP formation. It consists of a core antenna complex that captures photons, and an electron transfer chain that converts photonic excitation into a charge separation. The protein is Cytochrome b559 subunit beta of Crocosphaera subtropica (strain ATCC 51142 / BH68) (Cyanothece sp. (strain ATCC 51142)).